Consider the following 22-residue polypeptide: Chymotrypsin inhibitor (22 aa).

Residues 1-22 form a disordered region; it reads FDESFGFQGPSTYEKTPLGEPA.

In terms of tissue distribution, hemolymph.

Its subcellular location is the secreted. The protein localises to the extracellular space. Its function is as follows. Inhibits chymotrypsin stoichiometrically. Also inhibits porcine pancreatic elastase and trypsin. This Mythimna unipuncta (Armyworm moth) protein is Chymotrypsin inhibitor.